A 168-amino-acid chain; its full sequence is Photosystem I assembly protein Ycf3 (168 aa).

TPR repeat units follow at residues 35–68 (AFTYYRDRMSAQSEGNYAEALQNYYEAMRLEIDP), 72–105 (SYILYNIGLIHTSNGEHMKALEYYFRALERNPFL), and 120–153 (GEQAIQQGDSEIAGAWFDQAAEYWKQALALTPGN).

Belongs to the Ycf3 family.

It is found in the plastid membrane. Essential for the assembly of the photosystem I (PSI) complex. May act as a chaperone-like factor to guide the assembly of the PSI subunits. The sequence is that of Photosystem I assembly protein Ycf3 from Cuscuta reflexa (Southern Asian dodder).